The following is a 282-amino-acid chain: Protoheme IX farnesyltransferase (282 aa).

A run of 9 helical transmembrane segments spans residues 9 to 29 (LAKP…FLLA), 39 to 59 (LPLF…GCVF), 79 to 99 (LVTG…LLIL), 102 to 122 (LVLY…GFIV), 139 to 159 (VLGG…VVNI), 165 to 185 (LALF…IAML), 210 to 230 (IMLF…VLGS), 231 to 251 (ADLF…YKSI), and 261 to 281 (VFAK…CLTM).

The protein belongs to the UbiA prenyltransferase family. Protoheme IX farnesyltransferase subfamily.

The protein localises to the cell inner membrane. It carries out the reaction heme b + (2E,6E)-farnesyl diphosphate + H2O = Fe(II)-heme o + diphosphate. The protein operates within porphyrin-containing compound metabolism; heme O biosynthesis; heme O from protoheme: step 1/1. Functionally, converts heme B (protoheme IX) to heme O by substitution of the vinyl group on carbon 2 of heme B porphyrin ring with a hydroxyethyl farnesyl side group. The polypeptide is Protoheme IX farnesyltransferase (Francisella tularensis subsp. novicida (strain U112)).